A 584-amino-acid polypeptide reads, in one-letter code: Arginine--tRNA ligase (584 aa).

The 'HIGH' region motif lies at P125–H135.

It belongs to the class-I aminoacyl-tRNA synthetase family. In terms of assembly, monomer.

The protein localises to the cytoplasm. It catalyses the reaction tRNA(Arg) + L-arginine + ATP = L-arginyl-tRNA(Arg) + AMP + diphosphate. This is Arginine--tRNA ligase from Thermosynechococcus vestitus (strain NIES-2133 / IAM M-273 / BP-1).